We begin with the raw amino-acid sequence, 337 residues long: Putative 2-aminoethylphosphonate-binding periplasmic protein (337 aa).

The signal sequence occupies residues 1–21 (MKLSRLALLSVFALASAPSWA).

It belongs to the bacterial solute-binding protein 1 family.

It localises to the periplasm. Probably part of the PhnSTUV complex (TC 3.A.1.11.5) involved in 2-aminoethylphosphonate import. The sequence is that of Putative 2-aminoethylphosphonate-binding periplasmic protein (phnS) from Salmonella paratyphi A (strain ATCC 9150 / SARB42).